A 340-amino-acid chain; its full sequence is Dihydroorotate dehydrogenase (quinone) (340 aa).

FMN-binding positions include 65–69 (AGLDK) and T89. Residue K69 participates in substrate binding. 114–118 (NRMGF) lines the substrate pocket. N142 and N175 together coordinate FMN. Residue N175 participates in substrate binding. Residue S178 is the Nucleophile of the active site. N180 lines the substrate pocket. K220 and T248 together coordinate FMN. Residue 249-250 (NT) participates in substrate binding. Residues G271, G300, and 321–322 (YT) each bind FMN.

It belongs to the dihydroorotate dehydrogenase family. Type 2 subfamily. As to quaternary structure, monomer. FMN is required as a cofactor.

Its subcellular location is the cell membrane. It carries out the reaction (S)-dihydroorotate + a quinone = orotate + a quinol. Its pathway is pyrimidine metabolism; UMP biosynthesis via de novo pathway; orotate from (S)-dihydroorotate (quinone route): step 1/1. Catalyzes the conversion of dihydroorotate to orotate with quinone as electron acceptor. The chain is Dihydroorotate dehydrogenase (quinone) from Paraburkholderia xenovorans (strain LB400).